A 247-amino-acid polypeptide reads, in one-letter code: Ribosomal RNA small subunit methyltransferase J (247 aa).

Residues 101–102, 117–118, 153–154, and Asp-171 each bind S-adenosyl-L-methionine; these read RD, ER, and SS.

It belongs to the methyltransferase superfamily. RsmJ family.

It localises to the cytoplasm. It catalyses the reaction guanosine(1516) in 16S rRNA + S-adenosyl-L-methionine = N(2)-methylguanosine(1516) in 16S rRNA + S-adenosyl-L-homocysteine + H(+). Specifically methylates the guanosine in position 1516 of 16S rRNA. This Photorhabdus laumondii subsp. laumondii (strain DSM 15139 / CIP 105565 / TT01) (Photorhabdus luminescens subsp. laumondii) protein is Ribosomal RNA small subunit methyltransferase J.